Here is a 261-residue protein sequence, read N- to C-terminus: Cytochrome c oxidase subunit 3 (261 aa).

Over 1–15 (MTHQTHAYHMVNPSP) the chain is Mitochondrial matrix. The chain crosses the membrane as a helical span at residues 16-34 (WPLTGALSALLLTSGLMMW). The Mitochondrial intermembrane segment spans residues 35–40 (FHFNNP). A helical transmembrane segment spans residues 41–66 (TLLVLGLLTNLISSYQWWRDIVREGT). The Mitochondrial matrix segment spans residues 67–72 (YQGHHT). Residues 73–105 (KVVQKGLRYGMVLFIISEVFFFLGFFWAFYHSS) traverse the membrane as a helical segment. Over 106-128 (LAPTPELGGCWPPTGISPLNPLE) the chain is Mitochondrial intermembrane. A helical membrane pass occupies residues 129 to 152 (VPLLNTSILLASGVSITWSHHSLM). The Mitochondrial matrix segment spans residues 153 to 155 (EGN). Residues 156 to 183 (RKQMIQALMITIALGLYFTALQAMEYYE) traverse the membrane as a helical segment. At 184-190 (SSFTISD) the chain is on the mitochondrial intermembrane side. The chain crosses the membrane as a helical span at residues 191–223 (GVYGSTFFVATGFHGLHVIIGTTFLITCLLRQL). The Mitochondrial matrix portion of the chain corresponds to 224–232 (LYHFTSNHH). The chain crosses the membrane as a helical span at residues 233–256 (FGFEAAAWYWHFVDVVWLFLYVSI). Topologically, residues 257–261 (YWWGS) are mitochondrial intermembrane.

It belongs to the cytochrome c oxidase subunit 3 family. As to quaternary structure, component of the cytochrome c oxidase (complex IV, CIV), a multisubunit enzyme composed of 14 subunits. The complex is composed of a catalytic core of 3 subunits MT-CO1, MT-CO2 and MT-CO3, encoded in the mitochondrial DNA, and 11 supernumerary subunits COX4I, COX5A, COX5B, COX6A, COX6B, COX6C, COX7A, COX7B, COX7C, COX8 and NDUFA4, which are encoded in the nuclear genome. The complex exists as a monomer or a dimer and forms supercomplexes (SCs) in the inner mitochondrial membrane with NADH-ubiquinone oxidoreductase (complex I, CI) and ubiquinol-cytochrome c oxidoreductase (cytochrome b-c1 complex, complex III, CIII), resulting in different assemblies (supercomplex SCI(1)III(2)IV(1) and megacomplex MCI(2)III(2)IV(2)).

Its subcellular location is the mitochondrion inner membrane. It catalyses the reaction 4 Fe(II)-[cytochrome c] + O2 + 8 H(+)(in) = 4 Fe(III)-[cytochrome c] + 2 H2O + 4 H(+)(out). In terms of biological role, component of the cytochrome c oxidase, the last enzyme in the mitochondrial electron transport chain which drives oxidative phosphorylation. The respiratory chain contains 3 multisubunit complexes succinate dehydrogenase (complex II, CII), ubiquinol-cytochrome c oxidoreductase (cytochrome b-c1 complex, complex III, CIII) and cytochrome c oxidase (complex IV, CIV), that cooperate to transfer electrons derived from NADH and succinate to molecular oxygen, creating an electrochemical gradient over the inner membrane that drives transmembrane transport and the ATP synthase. Cytochrome c oxidase is the component of the respiratory chain that catalyzes the reduction of oxygen to water. Electrons originating from reduced cytochrome c in the intermembrane space (IMS) are transferred via the dinuclear copper A center (CU(A)) of subunit 2 and heme A of subunit 1 to the active site in subunit 1, a binuclear center (BNC) formed by heme A3 and copper B (CU(B)). The BNC reduces molecular oxygen to 2 water molecules using 4 electrons from cytochrome c in the IMS and 4 protons from the mitochondrial matrix. The sequence is that of Cytochrome c oxidase subunit 3 (MT-CO3) from Tachyglossus aculeatus aculeatus (Southeast Australian short-beaked echidna).